We begin with the raw amino-acid sequence, 95 residues long: Small ribosomal subunit protein bS18 (95 aa).

It belongs to the bacterial ribosomal protein bS18 family. As to quaternary structure, part of the 30S ribosomal subunit. Forms a tight heterodimer with protein bS6.

Its function is as follows. Binds as a heterodimer with protein bS6 to the central domain of the 16S rRNA, where it helps stabilize the platform of the 30S subunit. In Rickettsia canadensis (strain McKiel), this protein is Small ribosomal subunit protein bS18.